The chain runs to 130 residues: Small ribosomal subunit protein uS9 (130 aa).

Belongs to the universal ribosomal protein uS9 family.

The sequence is that of Small ribosomal subunit protein uS9 from Streptococcus equi subsp. equi (strain 4047).